The chain runs to 182 residues: Glycoprotein Q2 (182 aa).

The N-terminal stretch at 1-20 (MHFVAVYILTHFHAYPGVAA) is a signal peptide. N-linked (GlcNAc...) asparagine; by host glycosylation is found at asparagine 74 and asparagine 110.

In terms of assembly, interacts with isoform gQ2. The heterodimer gQ1-gQ2 associates with the glycoprotein complex gH-gL to form a tetrameric complex. The gH/gL/gQ1/gQ2 complex binds to host TNFRSF4. Post-translationally, glycosylated by host.

The protein localises to the virion membrane. Its subcellular location is the host endoplasmic reticulum-Golgi intermediate compartment. Functionally, plays a role in virus entry by participating in host receptor binding at the cell surface. This Human herpesvirus 6B (strain Z29) (HHV-6 variant B) protein is Glycoprotein Q2.